The chain runs to 170 residues: UPF0260 protein RPB_3505 (170 aa).

The protein belongs to the UPF0260 family.

The sequence is that of UPF0260 protein RPB_3505 from Rhodopseudomonas palustris (strain HaA2).